The sequence spans 1082 residues: CRISPR-associated endonuclease Cas9 (1082 aa).

Residue Asp-16 is the For RuvC-like nuclease domain of the active site. Asp-16, Glu-504, and Glu-508 together coordinate Mg(2+). The HNH Cas9-type domain occupies 512 to 667; it reads SFKDRKEIEK…DEDGFKERNL (156 aa). The Proton acceptor for HNH nuclease domain role is filled by His-588. His-723 is a binding site for Mg(2+).

It belongs to the CRISPR-associated protein Cas9 family. Subtype II-C subfamily. As to quaternary structure, monomer. Binds crRNA and tracrRNA. It depends on Mg(2+) as a cofactor.

CRISPR (clustered regularly interspaced short palindromic repeat) is an adaptive immune system that provides protection against mobile genetic elements (viruses, transposable elements and conjugative plasmids). CRISPR clusters contain spacers, sequences complementary to antecedent mobile elements, and target invading nucleic acids. CRISPR clusters are transcribed and processed into CRISPR RNA (crRNA). In type II CRISPR systems correct processing of pre-crRNA requires a trans-encoded small RNA (tracrRNA), endogenous ribonuclease 3 (rnc) and this protein. The tracrRNA serves as a guide for ribonuclease 3-aided processing of pre-crRNA. Subsequently Cas9/crRNA/tracrRNA endonucleolytically cleaves linear or circular dsDNA target complementary to the spacer; Cas9 is inactive in the absence of the 2 guide RNAs (gRNA). Cas9 recognizes the protospacer adjacent motif (PAM) in the CRISPR repeat sequences to help distinguish self versus nonself, as targets within the bacterial CRISPR locus do not have PAMs. PAM recognition is also required for catalytic activity. Cuts target DNA in Cas9:gRNAs mixing experiments with C.jejuni strain NCTC 11168 and P.multocoda strain Pm70. The chain is CRISPR-associated endonuclease Cas9 from Neisseria meningitidis serogroup A / serotype 4A (strain DSM 15465 / Z2491).